The following is a 428-amino-acid chain: Serine--tRNA ligase (428 aa).

235–237 (TAE) is an L-serine binding site. 266–268 (RSE) contributes to the ATP binding site. E289 is a binding site for L-serine. 353–356 (EISS) provides a ligand contact to ATP. S389 lines the L-serine pocket.

This sequence belongs to the class-II aminoacyl-tRNA synthetase family. Type-1 seryl-tRNA synthetase subfamily. Homodimer. The tRNA molecule binds across the dimer.

The protein resides in the cytoplasm. It catalyses the reaction tRNA(Ser) + L-serine + ATP = L-seryl-tRNA(Ser) + AMP + diphosphate + H(+). The catalysed reaction is tRNA(Sec) + L-serine + ATP = L-seryl-tRNA(Sec) + AMP + diphosphate + H(+). The protein operates within aminoacyl-tRNA biosynthesis; selenocysteinyl-tRNA(Sec) biosynthesis; L-seryl-tRNA(Sec) from L-serine and tRNA(Sec): step 1/1. In terms of biological role, catalyzes the attachment of serine to tRNA(Ser). Is also able to aminoacylate tRNA(Sec) with serine, to form the misacylated tRNA L-seryl-tRNA(Sec), which will be further converted into selenocysteinyl-tRNA(Sec). The chain is Serine--tRNA ligase from Psychromonas ingrahamii (strain DSM 17664 / CCUG 51855 / 37).